A 388-amino-acid polypeptide reads, in one-letter code: Probable protein phosphatase 2C 43 (388 aa).

The 300-residue stretch at 53-352 folds into the PPM-type phosphatase domain; it reads EFSFAVVQAN…DDITVVVVFI (300 aa). Residues aspartate 84, glycine 85, aspartate 284, and aspartate 343 each contribute to the Mn(2+) site.

It belongs to the PP2C family. The cofactor is Mg(2+). Requires Mn(2+) as cofactor.

The enzyme catalyses O-phospho-L-seryl-[protein] + H2O = L-seryl-[protein] + phosphate. It catalyses the reaction O-phospho-L-threonyl-[protein] + H2O = L-threonyl-[protein] + phosphate. The chain is Probable protein phosphatase 2C 43 from Oryza sativa subsp. japonica (Rice).